We begin with the raw amino-acid sequence, 451 residues long: Ribulose bisphosphate carboxylase large chain (451 aa).

Lys5 is modified (N6,N6,N6-trimethyllysine). Substrate contacts are provided by Asn114 and Thr164. The active-site Proton acceptor is the Lys166. Lys168 serves as a coordination point for substrate. Residues Lys192, Asp194, and Glu195 each coordinate Mg(2+). Lys192 carries the N6-carboxylysine modification. The active-site Proton acceptor is the His285. The substrate site is built by Arg286, His318, and Ser370.

It belongs to the RuBisCO large chain family. Type I subfamily. Heterohexadecamer of 8 large chains and 8 small chains; disulfide-linked. The disulfide link is formed within the large subunit homodimers. It depends on Mg(2+) as a cofactor. Post-translationally, the disulfide bond which can form in the large chain dimeric partners within the hexadecamer appears to be associated with oxidative stress and protein turnover.

It is found in the plastid. It localises to the chloroplast. The enzyme catalyses 2 (2R)-3-phosphoglycerate + 2 H(+) = D-ribulose 1,5-bisphosphate + CO2 + H2O. The catalysed reaction is D-ribulose 1,5-bisphosphate + O2 = 2-phosphoglycolate + (2R)-3-phosphoglycerate + 2 H(+). In terms of biological role, ruBisCO catalyzes two reactions: the carboxylation of D-ribulose 1,5-bisphosphate, the primary event in carbon dioxide fixation, as well as the oxidative fragmentation of the pentose substrate in the photorespiration process. Both reactions occur simultaneously and in competition at the same active site. The sequence is that of Ribulose bisphosphate carboxylase large chain from Aristea glauca.